The chain runs to 193 residues: 3-isopropylmalate dehydratase small subunit (193 aa).

This sequence belongs to the LeuD family. LeuD type 1 subfamily. In terms of assembly, heterodimer of LeuC and LeuD.

The enzyme catalyses (2R,3S)-3-isopropylmalate = (2S)-2-isopropylmalate. It participates in amino-acid biosynthesis; L-leucine biosynthesis; L-leucine from 3-methyl-2-oxobutanoate: step 2/4. Functionally, catalyzes the isomerization between 2-isopropylmalate and 3-isopropylmalate, via the formation of 2-isopropylmaleate. This chain is 3-isopropylmalate dehydratase small subunit, found in Bacillus cereus (strain AH820).